Consider the following 445-residue polypeptide: tRNA-2-methylthio-N(6)-dimethylallyladenosine synthase (445 aa).

The region spanning 3 to 124 (KKLYIKTYGC…LPELISKVVR (122 aa)) is the MTTase N-terminal domain. Residues cysteine 12, cysteine 48, cysteine 87, cysteine 162, cysteine 166, and cysteine 169 each coordinate [4Fe-4S] cluster. The 233-residue stretch at 148 to 380 (YPQGTSAFIS…QQELMAQQLA (233 aa)) folds into the Radical SAM core domain. In terms of domain architecture, TRAM spans 383–445 (TSCVGSTMKV…SLNSLTGEIL (63 aa)).

The protein belongs to the methylthiotransferase family. MiaB subfamily. As to quaternary structure, monomer. [4Fe-4S] cluster serves as cofactor.

The protein localises to the cytoplasm. It carries out the reaction N(6)-dimethylallyladenosine(37) in tRNA + (sulfur carrier)-SH + AH2 + 2 S-adenosyl-L-methionine = 2-methylsulfanyl-N(6)-dimethylallyladenosine(37) in tRNA + (sulfur carrier)-H + 5'-deoxyadenosine + L-methionine + A + S-adenosyl-L-homocysteine + 2 H(+). Catalyzes the methylthiolation of N6-(dimethylallyl)adenosine (i(6)A), leading to the formation of 2-methylthio-N6-(dimethylallyl)adenosine (ms(2)i(6)A) at position 37 in tRNAs that read codons beginning with uridine. This is tRNA-2-methylthio-N(6)-dimethylallyladenosine synthase from Rickettsia conorii (strain ATCC VR-613 / Malish 7).